Here is a 158-residue protein sequence, read N- to C-terminus: 2-amino-4-hydroxy-6-hydroxymethyldihydropteridine pyrophosphokinase (158 aa).

It belongs to the HPPK family.

It carries out the reaction 6-hydroxymethyl-7,8-dihydropterin + ATP = (7,8-dihydropterin-6-yl)methyl diphosphate + AMP + H(+). Its pathway is cofactor biosynthesis; tetrahydrofolate biosynthesis; 2-amino-4-hydroxy-6-hydroxymethyl-7,8-dihydropteridine diphosphate from 7,8-dihydroneopterin triphosphate: step 4/4. Functionally, catalyzes the transfer of pyrophosphate from adenosine triphosphate (ATP) to 6-hydroxymethyl-7,8-dihydropterin, an enzymatic step in folate biosynthesis pathway. The polypeptide is 2-amino-4-hydroxy-6-hydroxymethyldihydropteridine pyrophosphokinase (folK) (Methylorubrum extorquens (strain ATCC 14718 / DSM 1338 / JCM 2805 / NCIMB 9133 / AM1) (Methylobacterium extorquens)).